The following is a 220-amino-acid chain: Deoxyribose-phosphate aldolase (220 aa).

Asp89 acts as the Proton donor/acceptor in catalysis. Catalysis depends on Lys151, which acts as the Schiff-base intermediate with acetaldehyde. Lys180 functions as the Proton donor/acceptor in the catalytic mechanism.

This sequence belongs to the DeoC/FbaB aldolase family. DeoC type 1 subfamily.

It is found in the cytoplasm. It catalyses the reaction 2-deoxy-D-ribose 5-phosphate = D-glyceraldehyde 3-phosphate + acetaldehyde. It participates in carbohydrate degradation; 2-deoxy-D-ribose 1-phosphate degradation; D-glyceraldehyde 3-phosphate and acetaldehyde from 2-deoxy-alpha-D-ribose 1-phosphate: step 2/2. Functionally, catalyzes a reversible aldol reaction between acetaldehyde and D-glyceraldehyde 3-phosphate to generate 2-deoxy-D-ribose 5-phosphate. This Streptococcus pneumoniae serotype 2 (strain D39 / NCTC 7466) protein is Deoxyribose-phosphate aldolase.